A 65-amino-acid polypeptide reads, in one-letter code: MSGHEQQRPSRREEDVEETPVVPAQAGAQAKESDADVDALLDEIDEVLESNSEEFVRGFVQKGGQ.

Residues 1–14 are compositionally biased toward basic and acidic residues; that stretch reads MSGHEQQRPSRREE. Positions 1 to 35 are disordered; it reads MSGHEQQRPSRREEDVEETPVVPAQAGAQAKESDA. The tract at residues 21 to 59 is ARC ATPase binding; the sequence is VVPAQAGAQAKESDADVDALLDEIDEVLESNSEEFVRGF. The stretch at 26–49 forms a coiled coil; the sequence is AGAQAKESDADVDALLDEIDEVLE. Glutamine 65 carries the post-translational modification Deamidated glutamine. Glutamine 65 is covalently cross-linked (Isoglutamyl lysine isopeptide (Gln-Lys) (interchain with K-? in acceptor proteins)).

This sequence belongs to the prokaryotic ubiquitin-like protein family. As to quaternary structure, strongly interacts with the proteasome-associated ATPase ARC through a hydrophobic interface; the interacting region of Pup lies in its C-terminal half. There is one Pup binding site per ARC hexamer ring. Is modified by deamidation of its C-terminal glutamine to glutamate by the deamidase Dop, a prerequisite to the subsequent pupylation process.

Its pathway is protein degradation; proteasomal Pup-dependent pathway. Its function is as follows. Protein modifier that is covalently attached to lysine residues of substrate proteins, thereby targeting them for proteasomal degradation. The tagging system is termed pupylation. This chain is Prokaryotic ubiquitin-like protein Pup, found in Kineococcus radiotolerans (strain ATCC BAA-149 / DSM 14245 / SRS30216).